Reading from the N-terminus, the 132-residue chain is Small ribosomal subunit protein uS8 (132 aa).

Belongs to the universal ribosomal protein uS8 family. Part of the 30S ribosomal subunit. Contacts proteins S5 and S12.

Its function is as follows. One of the primary rRNA binding proteins, it binds directly to 16S rRNA central domain where it helps coordinate assembly of the platform of the 30S subunit. The chain is Small ribosomal subunit protein uS8 from Staphylococcus aureus (strain USA300).